The following is a 236-amino-acid chain: Purine nucleoside phosphorylase DeoD-type 2 (236 aa).

Histidine 5 serves as a coordination point for a purine D-ribonucleoside. Phosphate contacts are provided by residues glycine 21, arginine 25, arginine 44, and 88–91 (RVGS). A purine D-ribonucleoside is bound by residues 180-182 (DME) and 204-205 (SD). The Proton donor role is filled by aspartate 205.

This sequence belongs to the PNP/UDP phosphorylase family. Homohexamer; trimer of homodimers.

It carries out the reaction a purine D-ribonucleoside + phosphate = a purine nucleobase + alpha-D-ribose 1-phosphate. It catalyses the reaction a purine 2'-deoxy-D-ribonucleoside + phosphate = a purine nucleobase + 2-deoxy-alpha-D-ribose 1-phosphate. Functionally, catalyzes the reversible phosphorolytic breakdown of the N-glycosidic bond in the beta-(deoxy)ribonucleoside molecules, with the formation of the corresponding free purine bases and pentose-1-phosphate. This is Purine nucleoside phosphorylase DeoD-type 2 from Photobacterium profundum (strain SS9).